A 237-amino-acid chain; its full sequence is Deoxyribose-phosphate aldolase (237 aa).

Asp94 serves as the catalytic Proton donor/acceptor. Lys158 functions as the Schiff-base intermediate with acetaldehyde in the catalytic mechanism. Lys187 acts as the Proton donor/acceptor in catalysis.

It belongs to the DeoC/FbaB aldolase family. DeoC type 1 subfamily.

It localises to the cytoplasm. It catalyses the reaction 2-deoxy-D-ribose 5-phosphate = D-glyceraldehyde 3-phosphate + acetaldehyde. Its pathway is carbohydrate degradation; 2-deoxy-D-ribose 1-phosphate degradation; D-glyceraldehyde 3-phosphate and acetaldehyde from 2-deoxy-alpha-D-ribose 1-phosphate: step 2/2. In terms of biological role, catalyzes a reversible aldol reaction between acetaldehyde and D-glyceraldehyde 3-phosphate to generate 2-deoxy-D-ribose 5-phosphate. The protein is Deoxyribose-phosphate aldolase of Lactobacillus acidophilus (strain ATCC 700396 / NCK56 / N2 / NCFM).